The following is a 426-amino-acid chain: Serine hydroxymethyltransferase (426 aa).

(6S)-5,6,7,8-tetrahydrofolate contacts are provided by residues Leu-122 and 126–128; that span reads GHL. An N6-(pyridoxal phosphate)lysine modification is found at Lys-231.

The protein belongs to the SHMT family. In terms of assembly, homodimer. Requires pyridoxal 5'-phosphate as cofactor.

It is found in the cytoplasm. It carries out the reaction (6R)-5,10-methylene-5,6,7,8-tetrahydrofolate + glycine + H2O = (6S)-5,6,7,8-tetrahydrofolate + L-serine. It functions in the pathway one-carbon metabolism; tetrahydrofolate interconversion. It participates in amino-acid biosynthesis; glycine biosynthesis; glycine from L-serine: step 1/1. Its function is as follows. Catalyzes the reversible interconversion of serine and glycine with tetrahydrofolate (THF) serving as the one-carbon carrier. This reaction serves as the major source of one-carbon groups required for the biosynthesis of purines, thymidylate, methionine, and other important biomolecules. Also exhibits THF-independent aldolase activity toward beta-hydroxyamino acids, producing glycine and aldehydes, via a retro-aldol mechanism. The protein is Serine hydroxymethyltransferase of Koribacter versatilis (strain Ellin345).